A 488-amino-acid chain; its full sequence is Integrin beta-like protein 1 (488 aa).

The first 21 residues, 1 to 21 (MHAGAFINFVWALSLVSLLAA), serve as a signal peptide directing secretion. Disulfide bonds link Cys-38/Cys-65, Cys-49/Cys-63, Cys-57/Cys-68, Cys-70/Cys-83, Cys-85/Cys-106, Cys-90/Cys-104, Cys-98/Cys-109, Cys-111/Cys-120, Cys-126/Cys-153, Cys-137/Cys-151, Cys-145/Cys-156, Cys-158/Cys-172, Cys-174/Cys-196, Cys-179/Cys-194, Cys-188/Cys-199, Cys-201/Cys-210, Cys-214/Cys-241, Cys-225/Cys-239, Cys-233/Cys-244, Cys-246/Cys-263, Cys-265/Cys-290, Cys-270/Cys-288, Cys-282/Cys-293, Cys-295/Cys-304, Cys-310/Cys-337, Cys-321/Cys-335, Cys-329/Cys-340, Cys-342/Cys-355, Cys-357/Cys-378, Cys-362/Cys-376, Cys-370/Cys-381, Cys-383/Cys-392, Cys-398/Cys-425, Cys-409/Cys-423, Cys-417/Cys-428, Cys-430/Cys-442, Cys-444/Cys-465, Cys-449/Cys-463, Cys-457/Cys-468, and Cys-470/Cys-479. I-EGF domains are found at residues 38–84 (CRLP…PLCE), 85–121 (CHDW…EACQ), 126–173 (CDLT…KYCE), 174–211 (CDDT…DKCE), 214–264 (CDIT…DTCE), 265–305 (CDER…RKCE), 310–356 (CALS…KNCE), 357–393 (CDDR…KLCQ), 398–443 (CNMT…EFCE), and 444–480 (CDDR…NACE). The I repeat unit spans residues 49–89 (CRTPDGSICSGRGSCDCGICLCEVKEAGKYYGPLCECHDWV). The cysteine-rich tandem repeats stretch occupies residues 49-488 (CRTPDGSICS…CEIWLGSEYP (440 aa)). The stretch at 90–136 (CHTYDGQVCAGHGQCDCGVCKCDVGWSGEACQYPTTCDLTRKKSNEM) is one II repeat. An III repeat occupies 137-178 (CKNSQAVICSNAGTCQCGRCKCENSDNSGLIYGKYCECDDTE). One copy of the IV repeat lies at 179–224 (CFDDETQEICGGHGKCYCGNCYCEAGWHGDKCEFQCDITPWEIKKR). The V repeat unit spans residues 225-269 (CTSPDGKICSNRGTCVCGECTCHDVDPTGDWGDIHGDTCECDERN). Residues 270-320 (CKSVYDRYSDDFCSGHGQCNCGRCDCKDGWTGRKCEHPRACALSIEESKKK) form a VI repeat. A VII repeat occupies 321-361 (CQGSASQPCSGRGKCECGQCTCFPPGDSKVYGKNCECDDRQ). One copy of the VIII repeat lies at 362-408 (CEDLEGKICGEHGTCSCGRCICEAGWFGKLCQHERKCNMTEEESKSQ). The N-linked (GlcNAc...) asparagine glycan is linked to Asn-399. One copy of the IX repeat lies at 409-448 (CESDDGILCSGKGSCHCGKCICSPQEWYVSGEFCECDDRD). The stretch at 449–488 (CDKHDGLICTGNGICNCGNCECWEGWNGNACEIWLGSEYP) is one X repeat.

The protein resides in the secreted. The chain is Integrin beta-like protein 1 (itgbl1) from Xenopus laevis (African clawed frog).